Here is a 232-residue protein sequence, read N- to C-terminus: Pyridoxal 5'-phosphate synthase subunit PdxS (232 aa).

Lys-23 functions as the Schiff-base intermediate with D-ribose 5-phosphate in the catalytic mechanism. Residue Gly-95 participates in D-ribose 5-phosphate binding. Residue Arg-107 participates in D-glyceraldehyde 3-phosphate binding. Residues Gly-156 and 177–178 each bind D-ribose 5-phosphate; that span reads GS.

The protein belongs to the PdxS/SNZ family. In terms of assembly, in the presence of PdxT, forms a dodecamer of heterodimers.

The enzyme catalyses aldehydo-D-ribose 5-phosphate + D-glyceraldehyde 3-phosphate + L-glutamine = pyridoxal 5'-phosphate + L-glutamate + phosphate + 3 H2O + H(+). Its pathway is cofactor biosynthesis; pyridoxal 5'-phosphate biosynthesis. In terms of biological role, catalyzes the formation of pyridoxal 5'-phosphate from ribose 5-phosphate (RBP), glyceraldehyde 3-phosphate (G3P) and ammonia. The ammonia is provided by the PdxT subunit. Can also use ribulose 5-phosphate and dihydroxyacetone phosphate as substrates, resulting from enzyme-catalyzed isomerization of RBP and G3P, respectively. The protein is Pyridoxal 5'-phosphate synthase subunit PdxS of Clostridium novyi.